The sequence spans 152 residues: UPF0179 protein Mlab_1307 (152 aa).

It belongs to the UPF0179 family.

The chain is UPF0179 protein Mlab_1307 from Methanocorpusculum labreanum (strain ATCC 43576 / DSM 4855 / Z).